The sequence spans 173 residues: Large ribosomal subunit protein uL10 (173 aa).

This sequence belongs to the universal ribosomal protein uL10 family. In terms of assembly, part of the ribosomal stalk of the 50S ribosomal subunit. The N-terminus interacts with L11 and the large rRNA to form the base of the stalk. The C-terminus forms an elongated spine to which L12 dimers bind in a sequential fashion forming a multimeric L10(L12)X complex.

Its function is as follows. Forms part of the ribosomal stalk, playing a central role in the interaction of the ribosome with GTP-bound translation factors. This chain is Large ribosomal subunit protein uL10, found in Myxococcus xanthus (strain DK1622).